Reading from the N-terminus, the 108-residue chain is MTPDVLKNIADTLEARREAAPQSSYVASLFHKGEDAILKKVAEEAAETLMASKDKDKLHLVREVADLWFHTMVLLTYHGLRPEDVVMELHRREGISGLDEKASRKPTA.

This sequence belongs to the PRA-PH family.

The protein localises to the cytoplasm. The enzyme catalyses 1-(5-phospho-beta-D-ribosyl)-ATP + H2O = 1-(5-phospho-beta-D-ribosyl)-5'-AMP + diphosphate + H(+). The protein operates within amino-acid biosynthesis; L-histidine biosynthesis; L-histidine from 5-phospho-alpha-D-ribose 1-diphosphate: step 2/9. The sequence is that of Phosphoribosyl-ATP pyrophosphatase from Chromobacterium violaceum (strain ATCC 12472 / DSM 30191 / JCM 1249 / CCUG 213 / NBRC 12614 / NCIMB 9131 / NCTC 9757 / MK).